Reading from the N-terminus, the 339-residue chain is Anthranilate phosphoribosyltransferase (339 aa).

5-phospho-alpha-D-ribose 1-diphosphate contacts are provided by residues glycine 78, 81-82, threonine 86, 88-91, 106-114, and serine 118; these read GD, NAST, and KHGNRSVTS. Glycine 78 provides a ligand contact to anthranilate. A Mg(2+)-binding site is contributed by serine 90. Residue asparagine 109 coordinates anthranilate. Residue arginine 164 coordinates anthranilate. Aspartate 225 and glutamate 226 together coordinate Mg(2+). Residues 248 to 265 show a composition bias toward basic and acidic residues; sequence TVAPEDVGLDRADPKDVA. Residues 248–271 form a disordered region; sequence TVAPEDVGLDRADPKDVAGADPET.

It belongs to the anthranilate phosphoribosyltransferase family. In terms of assembly, homodimer. Mg(2+) is required as a cofactor.

The catalysed reaction is N-(5-phospho-beta-D-ribosyl)anthranilate + diphosphate = 5-phospho-alpha-D-ribose 1-diphosphate + anthranilate. It functions in the pathway amino-acid biosynthesis; L-tryptophan biosynthesis; L-tryptophan from chorismate: step 2/5. In terms of biological role, catalyzes the transfer of the phosphoribosyl group of 5-phosphorylribose-1-pyrophosphate (PRPP) to anthranilate to yield N-(5'-phosphoribosyl)-anthranilate (PRA). The chain is Anthranilate phosphoribosyltransferase from Methanopyrus kandleri (strain AV19 / DSM 6324 / JCM 9639 / NBRC 100938).